We begin with the raw amino-acid sequence, 451 residues long: Trigger factor (451 aa).

Residues 171–256 form the PPIase FKBP-type domain; that stretch reads GDRVKVNFKG…ATAIEAPEDK (86 aa).

It belongs to the FKBP-type PPIase family. Tig subfamily.

The protein resides in the cytoplasm. It catalyses the reaction [protein]-peptidylproline (omega=180) = [protein]-peptidylproline (omega=0). Involved in protein export. Acts as a chaperone by maintaining the newly synthesized protein in an open conformation. Functions as a peptidyl-prolyl cis-trans isomerase. The chain is Trigger factor from Bradyrhizobium sp. (strain ORS 278).